We begin with the raw amino-acid sequence, 517 residues long: Ovoinhibitor (517 aa).

Kazal-like domains follow at residues 67–132 (FGIE…ECRP), 133–197 (KHVT…ECKL), 198–263 (EIGS…KCRQ), 264–329 (EIPE…RCKE), 330–394 (RSTP…RCRE), 395–460 (EVPE…RCEE), and 461–517 (DITK…MAAC). N-linked (GlcNAc...) asparagine glycosylation is present at N72. Intrachain disulfides connect C73–C112, C90–C109, C98–C130, C139–C177, C155–C174, C163–C195, C204–C243, C221–C240, C229–C261, C270–C309, C287–C306, C295–C327, C336–C374, C352–C371, C360–C392, C401–C440, C418–C437, C426–C458, C467–C499, C477–C496, and C485–C517. The N-linked (GlcNAc...) asparagine glycan is linked to N186. N-linked (GlcNAc...) asparagine glycosylation occurs at N506.

In terms of processing, glycosylated. Expressed in oviduct (at protein level). Expressed in egg white (at protein level). Expressed in egg yolk plasma of non-fertilized eggs (at protein level). Expressed in the magnum of the oviduct (at protein level). Expressed in oviduct. Expressed in liver. Expressed in the cortico-medullary border region of the bursa of Fabricius by the bursal secretory dendritic-like cells. Highly expressed in the magnum of the oviduct, and at a lower level in uterus. Weakly expressed in white isthmus and very weakly in infundibulum. Not expressed in duodenum and kidney.

The protein localises to the secreted. In terms of biological role, serine protease inhibitor involved in antimicrobial egg defense preventing contamination of table eggs (non-fertilized eggs) and protecting the chick embryo (fertilized eggs). Inhibits trypsin, chymotrypsin, elastase, subtilisin and a proteinase of fungus Aspergillus oryzae. Inhibits calcium-activated potassium channels KCNMA1 (bovine) and slo (Drosophila). Has antibacterial activity against B.thuringiensis LMSA 3.06.004, but not against S.aureus CIP 103 811, P.aeruginosa PAO1, B.cereus ATCC6464 or B.subtilis ATCC 6633. This Gallus gallus (Chicken) protein is Ovoinhibitor.